A 90-amino-acid chain; its full sequence is Acylphosphatase (90 aa).

The Acylphosphatase-like domain occupies serine 5–asparagine 90. Catalysis depends on residues arginine 20 and asparagine 38.

Belongs to the acylphosphatase family.

It catalyses the reaction an acyl phosphate + H2O = a carboxylate + phosphate + H(+). This Aeromonas salmonicida (strain A449) protein is Acylphosphatase (acyP).